An 84-amino-acid chain; its full sequence is Small ribosomal subunit protein bS20 (84 aa).

The protein belongs to the bacterial ribosomal protein bS20 family.

Functionally, binds directly to 16S ribosomal RNA. This is Small ribosomal subunit protein bS20 from Limosilactobacillus fermentum (strain NBRC 3956 / LMG 18251) (Lactobacillus fermentum).